The chain runs to 322 residues: Transcription factor IIIA (322 aa).

9 consecutive C2H2-type zinc fingers follow at residues Phe12–His36, Phe42–His64, Tyr70–His95, Tyr102–His126, Phe132–His156, Tyr159–His184, Leu188–His211, Phe218–His243, and Phe249–His273. A disordered region spans residues Val272–Pro322. Positions Lys278–Leu292 are enriched in basic residues. The span at Ser312–Pro322 shows a compositional bias: polar residues.

The protein localises to the nucleus. Involved in ribosomal large subunit biogenesis. Interacts with the internal control region (ICR) of approximately 50 bases within the 5S RNA genes, is required for correct transcription of these genes by RNA polymerase III. Also binds the transcribed 5S RNA's. The chain is Transcription factor IIIA (gtf3a) from Ictalurus punctatus (Channel catfish).